We begin with the raw amino-acid sequence, 865 residues long: MGKALVIVESPAKAKTINKYLGNDYVVKSSVGHIRDLPTSGSAAKKSADSTSTKTAKKPKKDERGALVNRMGVDPWHNWDAHYEVLPGKEKVVSELKQLAEKADHIYLATDLDREGEAIAWHLREVIGGDDARYSRVVFNEITKNAIRQAFEQPGELNINRVNAQQARRFMDRVVGYMVSPLLWKKIARGLSAGRVQSVAVRLVVEREREIKAFVPEEFWEIDANTTTPSGEALPLQVTHQNDKPFRPVNREQTLAAVSLLEKARYSVLEREDKPTSSKPGAPFITSTLQQAASTRLGFGVKKTMMMAQRLYEAGYITYMRTDSTNLSQDAVNMVRGYIGDNFGKKYLPDNPNQYASKENSQEAHEAIRPSDVAVMAESLKDMEADAQKLYQLIWRQFVACQMTPAQYDSTTLTVGAGEFRLKARGRILRFDGWTKVMPALRKGDEDRTLPAVNKGDALTLLELTPAQHFTKPPARFSEASLVKELEKRGIGRPSTYASIISTIQDRGYVRVENRRFYAEKMGEIVTDRLEENFRELMNYDFTAQMEDSLDQVANHQAEWKAVLDNFFSDFTQQLDKAEKDPEEGGMRPNQMVLTSIDCPTCGRKMGIRTASTGVFLGCSGYALSPKERCKTTINLVPENEVLNVLEGDDAETNALRAKRRCQKCGTAMDSYLIDPKRKLHVCGNNPTCDGYEIEEGEFRIKGYDGPIVECEKCGSEMHLKMGRFGKYMACTNDECKNTRKILRNGEVAPPKEDPVPLPELPCEKSDAYFVLRDGAAGIFLAANTFPKSRETRAPLVEELYRFRDRLPEKLRYLADAPQQDPEGNKTVVRFSRKTKQQYVAAEKDGKATGWSAFFVDGKWVEGKK.

One can recognise a Toprim domain in the interval 3 to 142; sequence KALVIVESPA…RYSRVVFNEI (140 aa). A Mg(2+)-binding site is contributed by glutamate 9. A disordered region spans residues 37 to 65; sequence LPTSGSAAKKSADSTSTKTAKKPKKDERG. The span at 39 to 54 shows a compositional bias: low complexity; the sequence is TSGSAAKKSADSTSTK. Aspartate 111 provides a ligand contact to Mg(2+). In terms of domain architecture, Topo IA-type catalytic spans 158–575; it reads NINRVNAQQA…NFFSDFTQQL (418 aa). Residues 192-197 are interaction with DNA; that stretch reads SAGRVQ. Residue tyrosine 319 is the O-(5'-phospho-DNA)-tyrosine intermediate of the active site. 3 C4-type zinc fingers span residues 599-630, 662-689, and 711-736; these read CPTC…KERC, CQKC…NPTC, and CEKC…NDEC.

The protein belongs to the type IA topoisomerase family. As to quaternary structure, monomer. Requires Mg(2+) as cofactor.

The catalysed reaction is ATP-independent breakage of single-stranded DNA, followed by passage and rejoining.. Its function is as follows. Releases the supercoiling and torsional tension of DNA, which is introduced during the DNA replication and transcription, by transiently cleaving and rejoining one strand of the DNA duplex. Introduces a single-strand break via transesterification at a target site in duplex DNA. The scissile phosphodiester is attacked by the catalytic tyrosine of the enzyme, resulting in the formation of a DNA-(5'-phosphotyrosyl)-enzyme intermediate and the expulsion of a 3'-OH DNA strand. The free DNA strand then undergoes passage around the unbroken strand, thus removing DNA supercoils. Finally, in the religation step, the DNA 3'-OH attacks the covalent intermediate to expel the active-site tyrosine and restore the DNA phosphodiester backbone. The protein is DNA topoisomerase 1 of Salmonella typhimurium (strain LT2 / SGSC1412 / ATCC 700720).